Here is a 24-residue protein sequence, read N- to C-terminus: Calcium-binding shell glycoprotein P50 (24 aa).

The interval 1 to 24 (KDALEHTGFAPKKDGEEHVEWNYN) is disordered.

Glycosylated. In terms of tissue distribution, nacreous and prismatic layers of the shell.

Its function is as follows. Calcium-binding. The protein is Calcium-binding shell glycoprotein P50 of Unio pictorum (Painter's mussel).